The sequence spans 509 residues: Probable cytosol aminopeptidase (509 aa).

Positions 277 and 282 each coordinate Mn(2+). K289 is a catalytic residue. Mn(2+) is bound by residues D300, D359, and E361. R363 is a catalytic residue.

It belongs to the peptidase M17 family. It depends on Mn(2+) as a cofactor.

Its subcellular location is the cytoplasm. It catalyses the reaction Release of an N-terminal amino acid, Xaa-|-Yaa-, in which Xaa is preferably Leu, but may be other amino acids including Pro although not Arg or Lys, and Yaa may be Pro. Amino acid amides and methyl esters are also readily hydrolyzed, but rates on arylamides are exceedingly low.. It carries out the reaction Release of an N-terminal amino acid, preferentially leucine, but not glutamic or aspartic acids.. Its function is as follows. Presumably involved in the processing and regular turnover of intracellular proteins. Catalyzes the removal of unsubstituted N-terminal amino acids from various peptides. The polypeptide is Probable cytosol aminopeptidase (Chloroherpeton thalassium (strain ATCC 35110 / GB-78)).